A 628-amino-acid chain; its full sequence is MSNGLPISIGRPCTHDSQRSLSAPDSRIHSGFNSLLDTDLPMVHSEGTSTPTQLLRHPNIWFGNLPPPPRRPQDNRDFSPLHPLVFPGHHSQLRHVHETQQVQQTCPGKLKLSGAEELPPAPQRQHSLPLHITRPSRFPHHFHARRPDVLPSVPDHGPVLTETKPRTSVRQPRSATRGPSFRPILLPKVVHVHDDPPHSSLRPRGSRSRQLQPTVRRPLLAPNQFHSPRQPPPLSDDPGILGPRPLAPHSTRDPPPRPITPGPSNTHDLRPLSVLPRTSPRRGLLPNPRRHRTSTGHIPPTTTSRPTGPPSRLQRPVHLYQSSPHTPNFRPSSIRKDALLQTGPRLGHLERLGQPANLRTSERSPPTKRRLPRSSEPNRLPKPLPEATLAPSYRHRRPYPLLPNPPAALPSIAYTSSRGKIHHSLPKGALPKEGAPPPPRRLPSPAPRPQLPLRDLGRTPGFPTPPKTPTRTPESRITASPTDIAPLDSDPVLSVRTEVHAPERRTFMDPEALRSALASLPSPPRSVGIIHTAPQTVLPANPPSPTRHLPPTSPPWILQSPVGEDAIVDSEDDSISSFHSHDFDSPSGPLRSQSPSRFRLHLRSPSTSSGIEPWSPASYDYGSAPDTD.

Disordered regions lie at residues 1-25 (MSNG…SAPD), 141-332 (HFHA…FRPS), 346-404 (LGHL…LLPN), 418-493 (RGKI…DPVL), and 535-628 (QTVL…PDTD). Residues 299 to 312 (PPTTTSRPTGPPSR) are compositionally biased toward low complexity. Residues 320–331 (YQSSPHTPNFRP) show a composition bias toward polar residues. Residues 434–450 (GAPPPPRRLPSPAPRPQ) show a composition bias toward pro residues.

This sequence belongs to the tymoviridae protein p69 family.

Its function is as follows. Acts as a suppressor of RNA-mediated gene silencing, also known as post-transcriptional gene silencing (PTGS), a mechanism of plant viral defense that limits the accumulation of viral RNAs. The polypeptide is 69 kDa protein (Brassica (Chinese cabbage)).